Consider the following 431-residue polypeptide: Mitochondrial distribution and morphology protein 12 (431 aa).

The SMP-LTD domain maps to 1-431 (MSIDLNWETL…VYPSFWTFLV (431 aa)). Disordered regions lie at residues 68-153 (DFYE…GVST) and 209-289 (QSHT…PKPE). A compositionally biased stretch (acidic residues) spans 69–96 (FYEDLDDDDGGSDEDDEGSNSCQTDEEN). Residues 97–113 (EAAKTLRERRKMDRVER) show a composition bias toward basic and acidic residues. Residues 115–129 (ANGSSNVSNPPSYTD) show a composition bias toward polar residues. Residues 241 to 252 (SASTLAVSSSTT) are compositionally biased toward low complexity.

The protein belongs to the MDM12 family. As to quaternary structure, component of the ER-mitochondria encounter structure (ERMES) or MDM complex, composed of mmm1, mdm10, mdm12 and mdm34. A mmm1 homodimer associates with one molecule of mdm12 on each side in a pairwise head-to-tail manner, and the SMP-LTD domains of mmm1 and mdm12 generate a continuous hydrophobic tunnel for phospholipid trafficking.

The protein localises to the mitochondrion outer membrane. It is found in the endoplasmic reticulum membrane. Functionally, component of the ERMES/MDM complex, which serves as a molecular tether to connect the endoplasmic reticulum (ER) and mitochondria. Components of this complex are involved in the control of mitochondrial shape and protein biogenesis, and function in nonvesicular lipid trafficking between the ER and mitochondria. Mdm12 is required for the interaction of the ER-resident membrane protein mmm1 and the outer mitochondrial membrane-resident beta-barrel protein mdm10. The mdm12-mmm1 subcomplex functions in the major beta-barrel assembly pathway that is responsible for biogenesis of all mitochondrial outer membrane beta-barrel proteins, and acts in a late step after the SAM complex. The mdm10-mdm12-mmm1 subcomplex further acts in the TOM40-specific pathway after the action of the mdm12-mmm1 complex. Essential for establishing and maintaining the structure of mitochondria and maintenance of mtDNA nucleoids. The polypeptide is Mitochondrial distribution and morphology protein 12 (Sclerotinia sclerotiorum (strain ATCC 18683 / 1980 / Ss-1) (White mold)).